The chain runs to 302 residues: MLSILSSLLSLLFLFIISCFFITSHFWFPLSLPKILGFIKITSSRDDYDNEQRDEGTYVVGVEELQRELMPRHVAVIMDGNRRWAKRAGLLTSQGHEAGAKRLIEFSELCFKLGIHTVSAFAFSTENWGRHKIEVKCLMSLIQHYLKSKIQYFQREETRVSVIGNLTKIPESLLRTVQEIEEATRSYKKKHLILAIDYSGRLDILRACKSIVKKSEKGLIREEDVDEALIERELLTNCTEFPSPDLLIRTSGEQRISNFFLWQLAYTELFFSPVLWPDFDKDKLLEALVSYQRRERRFGCRV.

The protein belongs to the UPP synthase family. It depends on Mg(2+) as a cofactor.

It functions in the pathway protein modification; protein glycosylation. Functionally, catalyzes cis-prenyl chain elongation to produce the polyprenyl backbone of dolichol, a glycosyl carrier-lipid required for the biosynthesis of several classes of glycoprotein. The chain is Dehydrodolichyl diphosphate synthase 3 from Arabidopsis thaliana (Mouse-ear cress).